We begin with the raw amino-acid sequence, 262 residues long: ATP synthase subunit a (262 aa).

The next 6 helical transmembrane spans lie at 32–52 (IAFT…AVFV), 98–118 (LFMF…VLGI), 127–147 (FTIT…VGFW), 153–173 (FFSL…IFPI), 189–209 (LFVA…FVID), and 219–239 (LLVG…EILV).

This sequence belongs to the ATPase A chain family. In terms of assembly, F-type ATPases have 2 components, CF(1) - the catalytic core - and CF(0) - the membrane proton channel. CF(1) has five subunits: alpha(3), beta(3), gamma(1), delta(1), epsilon(1). CF(0) has four main subunits: a, b, b' and c.

It is found in the cell inner membrane. Key component of the proton channel; it plays a direct role in the translocation of protons across the membrane. This is ATP synthase subunit a from Erythrobacter litoralis (strain HTCC2594).